The chain runs to 214 residues: Adenylate kinase (214 aa).

An ATP-binding site is contributed by 10–15 (GAGKGT). An NMP region spans residues 30–59 (STGDMFRDHKARGTEIGKQVQAIMDAGGLV). AMP-binding positions include Thr31, Arg36, 57–59 (GLV), 85–88 (GYPR), and Gln92. The tract at residues 126-163 (GRRSCPRCGAVYHVSQNPPHRAGFCDRDDTALVQREDD) is LID. ATP is bound at residue Arg127. Residues Cys130 and Cys133 each contribute to the Zn(2+) site. Residue 136-137 (VY) participates in ATP binding. Residues Cys150 and Asp153 each contribute to the Zn(2+) site. The AMP site is built by Arg160 and Arg171. An ATP-binding site is contributed by Gly199.

This sequence belongs to the adenylate kinase family. In terms of assembly, monomer.

Its subcellular location is the cytoplasm. The enzyme catalyses AMP + ATP = 2 ADP. The protein operates within purine metabolism; AMP biosynthesis via salvage pathway; AMP from ADP: step 1/1. In terms of biological role, catalyzes the reversible transfer of the terminal phosphate group between ATP and AMP. Plays an important role in cellular energy homeostasis and in adenine nucleotide metabolism. This is Adenylate kinase from Anaeromyxobacter sp. (strain K).